Consider the following 673-residue polypeptide: Putative potassium transport system protein Kup 1 (673 aa).

Transmembrane regions (helical) follow at residues 14–34, 58–78, 101–121, 147–167, 175–195, 196–216, 220–240, 252–272, 294–314, 345–365, 374–394, 403–423, and 427–447; these read GAGF…SPLY, LSLI…WIAL, WLII…ALTP, LPIV…QRFG, FGPV…INLF, GDFS…LLSP, AGIF…ALYS, VSWP…AAWL, LIIF…QALI, LYIP…VVYF, AYGL…TVYL, VFVV…FAAS, and FLHG…VMAI.

This sequence belongs to the HAK/KUP transporter (TC 2.A.72) family.

Its subcellular location is the cell membrane. The enzyme catalyses K(+)(in) + H(+)(in) = K(+)(out) + H(+)(out). Functionally, transport of potassium into the cell. Likely operates as a K(+):H(+) symporter. This Lactococcus lactis subsp. cremoris (strain MG1363) protein is Putative potassium transport system protein Kup 1.